The following is a 100-amino-acid chain: Aspartyl/glutamyl-tRNA(Asn/Gln) amidotransferase subunit C (100 aa).

It belongs to the GatC family. Heterotrimer of A, B and C subunits.

It catalyses the reaction L-glutamyl-tRNA(Gln) + L-glutamine + ATP + H2O = L-glutaminyl-tRNA(Gln) + L-glutamate + ADP + phosphate + H(+). The catalysed reaction is L-aspartyl-tRNA(Asn) + L-glutamine + ATP + H2O = L-asparaginyl-tRNA(Asn) + L-glutamate + ADP + phosphate + 2 H(+). Its function is as follows. Allows the formation of correctly charged Asn-tRNA(Asn) or Gln-tRNA(Gln) through the transamidation of misacylated Asp-tRNA(Asn) or Glu-tRNA(Gln) in organisms which lack either or both of asparaginyl-tRNA or glutaminyl-tRNA synthetases. The reaction takes place in the presence of glutamine and ATP through an activated phospho-Asp-tRNA(Asn) or phospho-Glu-tRNA(Gln). The sequence is that of Aspartyl/glutamyl-tRNA(Asn/Gln) amidotransferase subunit C from Rickettsia bellii (strain OSU 85-389).